The following is a 306-amino-acid chain: D-alanine--D-alanine ligase (306 aa).

The 203-residue stretch at 101-303 (KYLWQGCGLP…FSQLVARILE (203 aa)) folds into the ATP-grasp domain. Residue 134 to 189 (IDALGLPLFVKPSREGSSVGISRVNQASELQAALQEAFRFDDEVLVEAFLSGPEYT) coordinates ATP. 3 residues coordinate Mg(2+): D257, E270, and N272.

It belongs to the D-alanine--D-alanine ligase family. Mg(2+) is required as a cofactor. Mn(2+) serves as cofactor.

The protein resides in the cytoplasm. It catalyses the reaction 2 D-alanine + ATP = D-alanyl-D-alanine + ADP + phosphate + H(+). It participates in cell wall biogenesis; peptidoglycan biosynthesis. Cell wall formation. This Erwinia tasmaniensis (strain DSM 17950 / CFBP 7177 / CIP 109463 / NCPPB 4357 / Et1/99) protein is D-alanine--D-alanine ligase.